We begin with the raw amino-acid sequence, 409 residues long: Protein ROOT PRIMORDIUM DEFECTIVE 1 (409 aa).

In terms of domain architecture, PORR spans 47-386; the sequence is VRDHGYDNYM…RLAELVLMSP (340 aa).

As to expression, expressed in roots, hypocotyls, cotyledons and shoot apex.

Its function is as follows. Involved in pre-arranging the maintenance of the active cell proliferation during root primordium development. Does not seem to be involved in cell cycle progression. In Arabidopsis thaliana (Mouse-ear cress), this protein is Protein ROOT PRIMORDIUM DEFECTIVE 1 (RPD1).